The chain runs to 120 residues: Large ribosomal subunit protein eL18 (120 aa).

The protein belongs to the eukaryotic ribosomal protein eL18 family. As to quaternary structure, part of the 50S ribosomal subunit.

In Pyrococcus furiosus (strain ATCC 43587 / DSM 3638 / JCM 8422 / Vc1), this protein is Large ribosomal subunit protein eL18.